We begin with the raw amino-acid sequence, 169 residues long: uncharacterized protein (169 aa).

The transit peptide at 1 to 91 (MFSSTFRRLA…NKEQYTVRCL (91 aa)) directs the protein to the mitochondrion. The tract at residues 54–76 (PQPKSPGSLPSSTRTAPNPNGEE) is disordered. Residues 61 to 71 (SLPSSTRTAPN) show a composition bias toward polar residues.

It localises to the mitochondrion. This is an uncharacterized protein from Trypanosoma brucei brucei (strain 927/4 GUTat10.1).